A 226-amino-acid chain; its full sequence is Neuron-specific vesicular protein calcyon (226 aa).

Positions 1-21 (MVKLGCSFSGKPGKEAGDQDG) are disordered. Residues 1 to 88 (MVKLGCSFSG…EEGRRLPTAR (88 aa)) lie on the Extracellular side of the membrane. A helical membrane pass occupies residues 89 to 109 (MIAFAMALLGCVLIMYKAIWY). The Cytoplasmic segment spans residues 110 to 226 (DQFTCPDGFL…AEGVPSQPPK (117 aa)). The disordered stretch occupies residues 177-226 (HKGTTPAAMAVSTAAAAAAAEGTEPSGKSLDTREKEDPQKAEGVPSQPPK). Residues 183–196 (AAMAVSTAAAAAAA) are compositionally biased toward low complexity. Positions 206–216 (LDTREKEDPQK) are enriched in basic and acidic residues.

It belongs to the NSG family. In terms of assembly, interacts with CLTA. In terms of tissue distribution, most abundant in brain. Also expressed in testis and ovary and, at much lower levels, in kidney and heart.

Its subcellular location is the cytoplasmic vesicle membrane. The protein localises to the cell membrane. In terms of biological role, interacts with clathrin light chain A and stimulates clathrin self-assembly and clathrin-mediated endocytosis. The polypeptide is Neuron-specific vesicular protein calcyon (Caly) (Mus musculus (Mouse)).